Consider the following 419-residue polypeptide: F-box/LRR-repeat protein At1g67190 (419 aa).

The F-box domain maps to 1–48 (MDYLPVEVIGNILSRLGGARDVVIASATCRKWREACRKHLQTLSFNSA). LRR repeat units follow at residues 53–82 (YRDL…SIMM), 96–124 (WLMY…EICG), 133–157 (LAHN…LSLS), 158–183 (YVSI…ELVS), 185–209 (EIAM…YFDG), 245–272 (HFKL…DVNH), 273–297 (FTMV…RLWD), 301–326 (DDDD…SLSY), and 356–381 (INDV…IIYG).

In Arabidopsis thaliana (Mouse-ear cress), this protein is F-box/LRR-repeat protein At1g67190.